The primary structure comprises 1783 residues: uncharacterized protein (1783 aa).

The chain crosses the membrane as a helical span at residues Phe16 to Ile36. The segment covering Gly105–Asn119 has biased composition (low complexity). Residues Gly105–Lys125 form a disordered region. 8 helical membrane passes run Val917–Ile937, Val967–Leu987, Trp1010–Ile1030, Leu1084–Ile1104, Phe1660–Met1680, Phe1709–Ile1729, Gly1730–Leu1750, and Tyr1752–Ile1772.

The protein belongs to the ABC-4 integral membrane protein family.

Its subcellular location is the cell membrane. This is an uncharacterized protein from Mycoplasma genitalium (strain ATCC 33530 / DSM 19775 / NCTC 10195 / G37) (Mycoplasmoides genitalium).